We begin with the raw amino-acid sequence, 156 residues long: MSETAERKPILDVVGIQKLLPHRPPFLLVDRVVEFEPNKRVVALKGVTMNEPFFQGHFPAQPVMPGVLILEALAQAAALLATLSMKPEEVNDKITYLMGIDAARFRRPVVPGDRLELEVEVTKQKGAVWKQTGVARVDGQVVAEAEFMAMLADRER.

His57 is an active-site residue.

The protein belongs to the thioester dehydratase family. FabZ subfamily.

It localises to the cytoplasm. It carries out the reaction a (3R)-hydroxyacyl-[ACP] = a (2E)-enoyl-[ACP] + H2O. In terms of biological role, involved in unsaturated fatty acids biosynthesis. Catalyzes the dehydration of short chain beta-hydroxyacyl-ACPs and long chain saturated and unsaturated beta-hydroxyacyl-ACPs. The polypeptide is 3-hydroxyacyl-[acyl-carrier-protein] dehydratase FabZ (Anaeromyxobacter sp. (strain K)).